A 430-amino-acid chain; its full sequence is POU domain, class 2, transcription factor 3 (430 aa).

Disordered stretches follow at residues 1 to 40 (MVNL…NGLD), 60 to 81 (HRPC…SGDM), 129 to 180 (LLLP…EPTD), and 248 to 267 (DAES…YPTL). Composition is skewed to polar residues over residues 23-32 (ARSTFGQVES) and 67-78 (QGPTMMPGNQMS). Residues 129–139 (LLLPQTGPGLT) are compositionally biased toward low complexity. Residues 176-250 (DEPTDLEELE…LLEKWLNDAE (75 aa)) form the POU-specific domain. Residues 251–267 (SSPSDPSASTPSSYPTL) show a composition bias toward low complexity. Positions 274–333 (KRKKRTSIETNIRLTLEKRFQDNPKPSSEEISMIAEQLSMEKEVVRVWFCNRRQKEKRIN) form a DNA-binding region, homeobox. 2 stretches are compositionally biased toward low complexity: residues 355–364 (SLGSLSVPPV) and 374–390 (SSCS…PGSG). The tract at residues 355–413 (SLGSLSVPPVHSTMPGTVTSSCSPGNNSRPSSPGSGLHASSPTASQNNSKAAMNPSSAA) is disordered. A compositionally biased stretch (polar residues) spans 392–413 (HASSPTASQNNSKAAMNPSSAA).

Belongs to the POU transcription factor family. Class-2 subfamily. As to quaternary structure, interacts (via the POU domain) with POU2AF1 and POU2AF2 in a DNA-dependent manner; this interaction recruits POU2AF2 to chromatin and increases POU2F3 transactivation activity. As to expression, expressed in epidermis and hair follicles.

Its subcellular location is the nucleus. Functionally, transcription factor that binds to the octamer motif (5'-ATTTGCAT-3') and regulates cell type-specific differentiation pathways. Involved in the regulation of keratinocytes differentiation. The POU2F3-POU2AF2/POU2AF3 complex drives the expression of tuft-cell-specific genes, a rare chemosensory cells that coordinate immune and neural functions within mucosal epithelial tissues. Inhibits transactivation by POU2F1. This chain is POU domain, class 2, transcription factor 3 (Pou2f3), found in Rattus norvegicus (Rat).